The chain runs to 90 residues: MKVEVIFLASCVLFSLIHAHLSHEEPMKEPEYCRWTNAFNGTCSDRGNPQTMCFFDFLDAHTARVMPKNCACNDLPGNKRYCECSFVCNS.

Positions 1-19 are cleaved as a signal peptide; the sequence is MKVEVIFLASCVLFSLIHA. Disulfide bonds link Cys-33-Cys-88, Cys-43-Cys-72, Cys-53-Cys-82, and Cys-70-Cys-84.

Belongs to the DEFL family.

The protein localises to the secreted. This is Putative defensin-like protein 243 (SCRL9) from Arabidopsis thaliana (Mouse-ear cress).